A 198-amino-acid polypeptide reads, in one-letter code: Dephospho-CoA kinase (198 aa).

The DPCK domain occupies leucine 3–glycine 198. Alanine 11 to threonine 16 contributes to the ATP binding site.

This sequence belongs to the CoaE family.

The protein resides in the cytoplasm. It catalyses the reaction 3'-dephospho-CoA + ATP = ADP + CoA + H(+). It functions in the pathway cofactor biosynthesis; coenzyme A biosynthesis; CoA from (R)-pantothenate: step 5/5. Functionally, catalyzes the phosphorylation of the 3'-hydroxyl group of dephosphocoenzyme A to form coenzyme A. This Leifsonia xyli subsp. xyli (strain CTCB07) protein is Dephospho-CoA kinase.